We begin with the raw amino-acid sequence, 588 residues long: Protein kintoun (588 aa).

Disordered stretches follow at residues 199 to 223 (PGYE…PENS), 338 to 498 (PPLE…SSQE), and 510 to 535 (AANV…ADED). Positions 202–212 (EAKEPPEERDL) are enriched in basic and acidic residues. Residues 350-361 (PNPTSDPQNENQ) show a composition bias toward polar residues. 2 stretches are compositionally biased toward basic and acidic residues: residues 362–382 (TRVE…HQRG) and 393–433 (QVLE…KFEL). Positions 435–447 (DVQQENKGNCSNT) are enriched in polar residues. The span at 448-460 (KEVKCCRRTKDSL) shows a compositional bias: basic and acidic residues.

The protein belongs to the PIH1 family. Kintoun subfamily.

Its subcellular location is the cytoplasm. It is found in the dynein axonemal particle. Functionally, required for cytoplasmic pre-assembly of axonemal dyneins, thereby playing a central role in motility in cilia and flagella. Involved in pre-assembly of dynein arm complexes in the cytoplasm before intraflagellar transport loads them for the ciliary compartment. The protein is Protein kintoun of Oryzias latipes (Japanese rice fish).